The sequence spans 557 residues: MDFNNIPLATIKSSDDKGKDFIVEMTTRPSETKKKVPFSEDMREIPSLPNEEEANATDPQANEVADENGEGFEAEKISSWIWVLSAVAGISGLLFGYDTGVISGALAVLGSDLGHVLSSGQKELITSATSFAALISATTSGWLADWVGRKRLLLCADAIFVIGSVIMAASRNVAMMVVGRFIVGYGIGLTSLIVPMYITELAPARLRGRLVIIYVVFITGGQLIAYSLNAAFEHVHQGWRIMFGIGAAPALGQLISLFWTPESPRYLLRHNHVEKVYKILSRIHPEAKPAEIAYKVSLIQEGVKVDFPEGNKFQHFFHSLKVLFTVPSNRRSLFIGCFLQWFQQFSGTNAIQYFSAIIFQSVGFKNSISVSIVVGATNFVFTIVAFMFIDRIGRRRILLCTSAVMIAGLALCAIAYHFLPADTTQNTNSGWQYVVLASIIIFLASYASGIGNIPWQQAELFPMEVRALGAGFSTAINWVGNLIISASFLTMMESITPTGTFALFAGFCFVGLVTSYFTYPELAGMSIENIHKLLEKGFWQAVKESTKRVRKGRIDEA.

At 1–76 the chain is on the cytoplasmic side; it reads MDFNNIPLAT…ENGEGFEAEK (76 aa). The disordered stretch occupies residues 24–69; that stretch reads EMTTRPSETKKKVPFSEDMREIPSLPNEEEANATDPQANEVADENG. Over residues 30-44 the composition is skewed to basic and acidic residues; that stretch reads SETKKKVPFSEDMRE. Residues 77-97 form a helical membrane-spanning segment; it reads ISSWIWVLSAVAGISGLLFGY. Topologically, residues 98 to 99 are extracellular; it reads DT. A helical transmembrane segment spans residues 100-120; the sequence is GVISGALAVLGSDLGHVLSSG. Over 121-123 the chain is Cytoplasmic; that stretch reads QKE. A helical transmembrane segment spans residues 124–144; sequence LITSATSFAALISATTSGWLA. The Extracellular portion of the chain corresponds to 145 to 157; that stretch reads DWVGRKRLLLCAD. Residues 158-178 traverse the membrane as a helical segment; it reads AIFVIGSVIMAASRNVAMMVV. Topologically, residues 179-180 are cytoplasmic; sequence GR. The helical transmembrane segment at 181–201 threads the bilayer; that stretch reads FIVGYGIGLTSLIVPMYITEL. The Extracellular portion of the chain corresponds to 202–209; sequence APARLRGR. A helical transmembrane segment spans residues 210 to 230; it reads LVIIYVVFITGGQLIAYSLNA. The Cytoplasmic portion of the chain corresponds to 231–240; the sequence is AFEHVHQGWR. The chain crosses the membrane as a helical span at residues 241–261; it reads IMFGIGAAPALGQLISLFWTP. At 262–367 the chain is on the extracellular side; the sequence is ESPRYLLRHN…IFQSVGFKNS (106 aa). A helical membrane pass occupies residues 368–388; sequence ISVSIVVGATNFVFTIVAFMF. Over 389 to 396 the chain is Cytoplasmic; the sequence is IDRIGRRR. A helical membrane pass occupies residues 397–417; sequence ILLCTSAVMIAGLALCAIAYH. At 418 to 432 the chain is on the extracellular side; it reads FLPADTTQNTNSGWQ. Residues 433–453 traverse the membrane as a helical segment; sequence YVVLASIIIFLASYASGIGNI. At 454–468 the chain is on the cytoplasmic side; the sequence is PWQQAELFPMEVRAL. A helical membrane pass occupies residues 469 to 489; sequence GAGFSTAINWVGNLIISASFL. At 490–498 the chain is on the extracellular side; that stretch reads TMMESITPT. A helical transmembrane segment spans residues 499–519; sequence GTFALFAGFCFVGLVTSYFTY. Residues 520–557 lie on the Cytoplasmic side of the membrane; it reads PELAGMSIENIHKLLEKGFWQAVKESTKRVRKGRIDEA.

The protein belongs to the major facilitator superfamily. Sugar transporter (TC 2.A.1.1) family.

Its subcellular location is the membrane. The catalysed reaction is myo-inositol(out) + H(+)(out) = myo-inositol(in) + H(+)(in). Its function is as follows. Transporter for myo-inositol. The sequence is that of Myo-inositol transporter 2 (itr2) from Schizosaccharomyces pombe (strain 972 / ATCC 24843) (Fission yeast).